A 481-amino-acid polypeptide reads, in one-letter code: MVIFEKTRGKNSPSVMPSKKGDVSNIPTDMLRTKKPILPEQAELDVVRHYTQLSRKNFCIDTNFYPLGSCTMKYNPRAAHKYASLAGFLERHPYASAQSVQGTLECLYDLQNLIKELTGMTGVSLAPMAGAQGEFAGVAMIKAYHHKRSDFERDEIIVPDAAHGTNPATAKVCGLKVIEIPTKKDGDIDIEALDKVLGPKTAGIMLTNPSTVGVFERNIAVIAKKVHEAGGLLYYDGANLNAIMGKARPGDMGFDVLHMNLHKTFATPHGGGGPGAGPVAVNDKLKEFLPVPMVGKKDDKFVWLEEKDVSNTIGRLSAFNGNIGVLIRAYIYGAMLGGNGLTEASEIATLNANYMMARLKEEGFTIAYPDRRASHEFIVTLKPEFLNYGVTATDFAKCLIDKGVHAPTMYFPLLVPECLLIEPTETENVDSMEKFIQAMVEIRDIAKKDPQYLKGAPYNLPARRLDDVKAAKELDIVWQPK.

The disordered stretch occupies residues 1–26; sequence MVIFEKTRGKNSPSVMPSKKGDVSNI. The residue at position 263 (K263) is an N6-(pyridoxal phosphate)lysine.

The protein belongs to the GcvP family. C-terminal subunit subfamily. As to quaternary structure, the glycine cleavage system is composed of four proteins: P, T, L and H. In this organism, the P 'protein' is a heterodimer of two subunits. It depends on pyridoxal 5'-phosphate as a cofactor.

The enzyme catalyses N(6)-[(R)-lipoyl]-L-lysyl-[glycine-cleavage complex H protein] + glycine + H(+) = N(6)-[(R)-S(8)-aminomethyldihydrolipoyl]-L-lysyl-[glycine-cleavage complex H protein] + CO2. Its function is as follows. The glycine cleavage system catalyzes the degradation of glycine. The P protein binds the alpha-amino group of glycine through its pyridoxal phosphate cofactor; CO(2) is released and the remaining methylamine moiety is then transferred to the lipoamide cofactor of the H protein. In Francisella tularensis subsp. mediasiatica (strain FSC147), this protein is Probable glycine dehydrogenase (decarboxylating) subunit 2.